Here is a 258-residue protein sequence, read N- to C-terminus: Sugar fermentation stimulation protein homolog (258 aa).

It belongs to the SfsA family.

The sequence is that of Sugar fermentation stimulation protein homolog from Prochlorococcus marinus (strain NATL2A).